Reading from the N-terminus, the 572-residue chain is Laccase-3 (572 aa).

The signal sequence occupies residues 1–18; the sequence is MARTTFLVSVSLFVSAVL. Plastocyanin-like domains lie at 21 to 145 and 157 to 304; these read TVEY…LVIY and IDDE…LIYE. Cu cation-binding residues include His82, His84, His127, and His129. Cys103 and Cys561 are disulfide-bonded. N-linked (GlcNAc...) asparagine glycosylation is found at Asn182, Asn228, Asn294, Asn367, and Asn405. Positions 422–540 constitute a Plastocyanin-like 3 domain; sequence DMPTLLKILT…EGFAMVFAEA (119 aa). His470, His473, His475, His522, Cys523, His524, and His528 together coordinate Cu cation.

Belongs to the multicopper oxidase family. Homodimer. Requires Cu cation as cofactor. In mycelia, at a lower level than LCC4.

The protein resides in the secreted. The enzyme catalyses 4 hydroquinone + O2 = 4 benzosemiquinone + 2 H2O. Lignin degradation and detoxification of lignin-derived products. The protein is Laccase-3 (LCC3) of Thanatephorus cucumeris (Black scurf of potato).